The following is a 189-amino-acid chain: Elongation factor P (189 aa).

It belongs to the elongation factor P family.

It localises to the cytoplasm. It functions in the pathway protein biosynthesis; polypeptide chain elongation. Involved in peptide bond synthesis. Stimulates efficient translation and peptide-bond synthesis on native or reconstituted 70S ribosomes in vitro. Probably functions indirectly by altering the affinity of the ribosome for aminoacyl-tRNA, thus increasing their reactivity as acceptors for peptidyl transferase. The chain is Elongation factor P from Xanthobacter autotrophicus (strain ATCC BAA-1158 / Py2).